Here is a 378-residue protein sequence, read N- to C-terminus: Phosphatidyl-myo-inositol mannosyltransferase (378 aa).

Residues Tyr-9 and Gly-16 each coordinate GDP-alpha-D-mannose. A 1,2-diacyl-sn-glycero-3-phospho-(1D-myo-inositol)-binding positions include Gln-18, 62-63 (YN), and Arg-68. GDP-alpha-D-mannose contacts are provided by residues Arg-196, 201–202 (RK), 251–253 (VDD), Lys-256, 274–278 (ESFGI), and Glu-282.

This sequence belongs to the glycosyltransferase group 1 family. As to quaternary structure, monomer. Mg(2+) is required as a cofactor.

The protein localises to the cell membrane. It catalyses the reaction a 1,2-diacyl-sn-glycero-3-phospho-(1D-myo-inositol) + GDP-alpha-D-mannose = a 1,2-diacyl-sn-glycero-3-phospho-[alpha-D-mannopyranosyl-(1&lt;-&gt;6)-D-myo-inositol] + GDP + H(+). It functions in the pathway phospholipid metabolism; phosphatidylinositol metabolism. Functionally, involved in the biosynthesis of phosphatidyl-myo-inositol mannosides (PIM) which are early precursors in the biosynthesis of lipomannans (LM) and lipoarabinomannans (LAM). Catalyzes the addition of a mannosyl residue from GDP-D-mannose (GDP-Man) to the position 2 of the carrier lipid phosphatidyl-myo-inositol (PI) to generate a phosphatidyl-myo-inositol bearing an alpha-1,2-linked mannose residue (PIM1). This is Phosphatidyl-myo-inositol mannosyltransferase from Mycobacterium bovis (strain ATCC BAA-935 / AF2122/97).